A 278-amino-acid chain; its full sequence is Secoisolariciresinol dehydrogenase (278 aa).

Residues 23 to 28 (GGAGGI), aspartate 47, valine 73, and asparagine 99 each bind NAD(+). Substrate is bound by residues serine 104 and serine 164. The active-site Proton donor/acceptor is tyrosine 167. 2 residues coordinate NAD(+): lysine 171 and valine 200.

This sequence belongs to the short-chain dehydrogenases/reductases (SDR) family. In terms of assembly, homotetramer. In terms of tissue distribution, mostly expressed in stems and rhizomes, and, to a lower extent, in leaves.

The catalysed reaction is (-)-secoisolariciresinol + 2 NAD(+) = (-)-matairesinol + 2 NADH + 2 H(+). The protein operates within aromatic compound metabolism; phenylpropanoid biosynthesis. Its function is as follows. Oxidoreductase involved in lignan biosynthesis. Also involved in the biosynthesis of etoposide, a chemotherapeutic compound of the topoisomerase inhibitor family. Catalyzes the stereospecific conversion of (-)-secoisolariciresinol to (-)-matairesinol via a lactol intermediate. The chain is Secoisolariciresinol dehydrogenase from Sinopodophyllum hexandrum (Himalayan may apple).